Here is a 201-residue protein sequence, read N- to C-terminus: 3-isopropylmalate dehydratase small subunit (201 aa).

The protein belongs to the LeuD family. LeuD type 1 subfamily. Heterodimer of LeuC and LeuD.

The enzyme catalyses (2R,3S)-3-isopropylmalate = (2S)-2-isopropylmalate. The protein operates within amino-acid biosynthesis; L-leucine biosynthesis; L-leucine from 3-methyl-2-oxobutanoate: step 2/4. Functionally, catalyzes the isomerization between 2-isopropylmalate and 3-isopropylmalate, via the formation of 2-isopropylmaleate. In Shewanella baltica (strain OS155 / ATCC BAA-1091), this protein is 3-isopropylmalate dehydratase small subunit.